The primary structure comprises 328 residues: Cytochrome c biogenesis protein CcsA (328 aa).

The next 8 helical transmembrane spans lie at 13 to 33, 46 to 66, 73 to 93, 101 to 121, 146 to 166, 234 to 254, 263 to 283, and 295 to 315; these read ISFS…LVNL, GIVI…IYSG, LYES…VSYF, LNAI…SGLL, MVLG…LLVI, IISL…VWAN, WDPK…YLHI, and AIVA…VNLL.

Belongs to the CcmF/CycK/Ccl1/NrfE/CcsA family. May interact with Ccs1.

It is found in the plastid. The protein localises to the chloroplast thylakoid membrane. In terms of biological role, required during biogenesis of c-type cytochromes (cytochrome c6 and cytochrome f) at the step of heme attachment. This Aethionema cordifolium (Lebanon stonecress) protein is Cytochrome c biogenesis protein CcsA.